A 248-amino-acid chain; its full sequence is MTTLFISDLHLDPSRPEITDLFLRFLREQAPTADALYILGDLFEAWIGDDTPSPAADAVADALKVLTDSGVPAYFIRGNRDFLLGEDYARRAGLRILPDPCVIELYGRPVLLQHGDLLCTDDIPYQQFRAQTRDPAFQAQFLSQPLAARIAFAQKARETSQARQSEMKQGDRATFENVTDVAPAEVDATFVRHGVDTMIHGHTHRPAIHALQAGGRACTRIVLGDWYEQGSVLRVDANGWTLDTLSRE.

Residues aspartate 8, histidine 10, aspartate 41, asparagine 79, and histidine 114 each coordinate Mn(2+). 79 to 80 (NR) is a substrate binding site. Positions 122, 160, 171, and 202 each coordinate substrate. Histidine 202 and histidine 204 together coordinate Mn(2+).

Belongs to the LpxH family. The cofactor is Mn(2+).

The protein resides in the cell inner membrane. The catalysed reaction is UDP-2-N,3-O-bis[(3R)-3-hydroxytetradecanoyl]-alpha-D-glucosamine + H2O = 2-N,3-O-bis[(3R)-3-hydroxytetradecanoyl]-alpha-D-glucosaminyl 1-phosphate + UMP + 2 H(+). It participates in glycolipid biosynthesis; lipid IV(A) biosynthesis; lipid IV(A) from (3R)-3-hydroxytetradecanoyl-[acyl-carrier-protein] and UDP-N-acetyl-alpha-D-glucosamine: step 4/6. In terms of biological role, hydrolyzes the pyrophosphate bond of UDP-2,3-diacylglucosamine to yield 2,3-diacylglucosamine 1-phosphate (lipid X) and UMP by catalyzing the attack of water at the alpha-P atom. Involved in the biosynthesis of lipid A, a phosphorylated glycolipid that anchors the lipopolysaccharide to the outer membrane of the cell. This is UDP-2,3-diacylglucosamine hydrolase from Stenotrophomonas maltophilia (strain R551-3).